Reading from the N-terminus, the 816-residue chain is Sucrose synthase 1 (816 aa).

Residues 280–757 (MVFNVVIMSP…GLQRIEEKYT (478 aa)) are GT-B glycosyltransferase.

The protein belongs to the glycosyltransferase 1 family. Plant sucrose synthase subfamily. As to quaternary structure, homotetramer or heterotetramer with SUS2. Expressed in root phloem and leaf mesophyll. Expressed in phloem tissues and aleurone layers of seeds and at lower levels in the pericarp and endosperm cells (at protein level). Predominantly expressed in elongating tissues including roots, developing leaves and internodes.

The catalysed reaction is an NDP-alpha-D-glucose + D-fructose = a ribonucleoside 5'-diphosphate + sucrose + H(+). Functionally, sucrose-cleaving enzyme that provides UDP-glucose and fructose for various metabolic pathways. The protein is Sucrose synthase 1 (SUS1) of Oryza sativa subsp. japonica (Rice).